The sequence spans 310 residues: Malate dehydrogenase (310 aa).

Residues 7–12 and Asp32 contribute to the NAD(+) site; that span reads GAGNVG. 2 residues coordinate substrate: Arg81 and Arg87. NAD(+)-binding positions include Asn94 and 117-119; that span reads VSN. Substrate is bound by residues Asn119 and Arg150. His174 functions as the Proton acceptor in the catalytic mechanism.

Belongs to the LDH/MDH superfamily. MDH type 3 family.

It catalyses the reaction (S)-malate + NAD(+) = oxaloacetate + NADH + H(+). Functionally, catalyzes the reversible oxidation of malate to oxaloacetate. The protein is Malate dehydrogenase of Chlorobium phaeobacteroides (strain DSM 266 / SMG 266 / 2430).